Reading from the N-terminus, the 327-residue chain is 2-methoxy-6-polyprenyl-1,4-benzoquinol methylase, mitochondrial (327 aa).

The N-terminal 42 residues, 1-42 (MAAPGSCALWSYCGRGWSRAMRGCQLLGLRSSWPGDLLSARL), are a transit peptide targeting the mitochondrion. S-adenosyl-L-methionine is bound by residues T117, D171, and 199 to 200 (DA).

The protein belongs to the class I-like SAM-binding methyltransferase superfamily. MenG/UbiE family. In terms of assembly, component of a multi-subunit COQ enzyme complex, composed of at least COQ3, COQ4, COQ5, COQ6, COQ7 and COQ9. Interacts with PYURF; the interaction is direct, stabilizes COQ5 protein and associates PYURF with COQ enzyme complex. Widely expressed, with highest levels in liver, lung, placenta and skeletal muscle.

Its subcellular location is the mitochondrion inner membrane. It catalyses the reaction 2-methoxy-6-(all-trans-decaprenyl)benzene-1,4-diol + S-adenosyl-L-methionine = 5-methoxy-2-methyl-3-(all-trans-decaprenyl)benzene-1,4-diol + S-adenosyl-L-homocysteine + H(+). Its pathway is cofactor biosynthesis; ubiquinone biosynthesis. Functionally, methyltransferase required for the conversion of 2-decaprenyl-6-methoxy-1,4-benzoquinol (DDMQH2) to 2-decaprenyl-3-methyl-6-methoxy-1,4-benzoquinol (DMQH2). The sequence is that of 2-methoxy-6-polyprenyl-1,4-benzoquinol methylase, mitochondrial from Homo sapiens (Human).